A 288-amino-acid chain; its full sequence is Glycine--tRNA ligase alpha subunit (288 aa).

Belongs to the class-II aminoacyl-tRNA synthetase family. In terms of assembly, tetramer of two alpha and two beta subunits.

Its subcellular location is the cytoplasm. The enzyme catalyses tRNA(Gly) + glycine + ATP = glycyl-tRNA(Gly) + AMP + diphosphate. This is Glycine--tRNA ligase alpha subunit from Rickettsia canadensis (strain McKiel).